Consider the following 459-residue polypeptide: Elongation factor 1-alpha 2 (459 aa).

A tr-type G domain is found at 5–242 (KTHINIVVIG…DCIIPPQRPT (238 aa)). The interval 14–21 (GHVDSGKS) is G1. The interval 70-74 (GITID) is G2. The interval 91 to 94 (DAPG) is G3. Positions 153 to 156 (NKMD) are G4. Residues 194–196 (SGF) form a G5 region. 2 positions are modified to 5-glutamyl glycerylphosphorylethanolamine: glutamate 301 and glutamate 374.

Belongs to the TRAFAC class translation factor GTPase superfamily. Classic translation factor GTPase family. EF-Tu/EF-1A subfamily.

The protein localises to the cytoplasm. Its function is as follows. This protein promotes the GTP-dependent binding of aminoacyl-tRNA to the A-site of ribosomes during protein biosynthesis. The sequence is that of Elongation factor 1-alpha 2 (eft-2) from Oscheius tipulae.